We begin with the raw amino-acid sequence, 1422 residues long: DNA-directed RNA polymerase subunit beta (1422 aa).

The disordered stretch occupies residues 1392–1422 (QAAREAAERDLGGGPLGAPRGAVASGEKSSA).

It belongs to the RNA polymerase beta chain family. The RNAP catalytic core consists of 2 alpha, 1 beta, 1 beta' and 1 omega subunit. When a sigma factor is associated with the core the holoenzyme is formed, which can initiate transcription.

It carries out the reaction RNA(n) + a ribonucleoside 5'-triphosphate = RNA(n+1) + diphosphate. In terms of biological role, DNA-dependent RNA polymerase catalyzes the transcription of DNA into RNA using the four ribonucleoside triphosphates as substrates. The chain is DNA-directed RNA polymerase subunit beta from Anaeromyxobacter dehalogenans (strain 2CP-C).